The following is a 213-amino-acid chain: MTDTTSMKHQTPLTSGDFTAADEPFALFETWLNEAIKSEPNDPNAMALATVDPDGLPDVRMVLMKGFDTEGFVFYSHIASQKGRELAANPKAALLFHWKSLRRQVRIRGNVTPVTDAEADAYFATRPKQAQIGAWASKQSEALESRFAFEQAIAKVAAKYIIGEVPRPPGWSGWRITPVRIEFWHDRPFRLHDRIEFRRDAAGQKWSKTRMYP.

FMN is bound by residues 60–65 (RMVLMK), 75–76 (YS), K82, and Q104. Residue K65 coordinates substrate. Substrate contacts are provided by Y122 and R126. Residues 139-140 (QS) and W184 each bind FMN. 190–192 (RLH) is a substrate binding site. Residue R194 coordinates FMN.

The protein belongs to the pyridoxamine 5'-phosphate oxidase family. Homodimer. It depends on FMN as a cofactor.

The enzyme catalyses pyridoxamine 5'-phosphate + O2 + H2O = pyridoxal 5'-phosphate + H2O2 + NH4(+). It carries out the reaction pyridoxine 5'-phosphate + O2 = pyridoxal 5'-phosphate + H2O2. It functions in the pathway cofactor metabolism; pyridoxal 5'-phosphate salvage; pyridoxal 5'-phosphate from pyridoxamine 5'-phosphate: step 1/1. It participates in cofactor metabolism; pyridoxal 5'-phosphate salvage; pyridoxal 5'-phosphate from pyridoxine 5'-phosphate: step 1/1. Its function is as follows. Catalyzes the oxidation of either pyridoxine 5'-phosphate (PNP) or pyridoxamine 5'-phosphate (PMP) into pyridoxal 5'-phosphate (PLP). The chain is Pyridoxine/pyridoxamine 5'-phosphate oxidase from Bradyrhizobium diazoefficiens (strain JCM 10833 / BCRC 13528 / IAM 13628 / NBRC 14792 / USDA 110).